The primary structure comprises 104 residues: Protein KleF (104 aa).

The polypeptide is Protein KleF (kleF) (Escherichia coli).